Consider the following 134-residue polypeptide: Photosystem II lipoprotein Psb27 (134 aa).

The first 24 residues, 1–24, serve as a signal peptide directing secretion; it reads MSFLKNQLSRLLALILVVAIGLTA. Cys25 carries the N-palmitoyl cysteine lipid modification. Residue Cys25 is the site of S-diacylglycerol cysteine attachment.

The protein belongs to the Psb27 family. In terms of assembly, monomer. Forms a complex with a monomeric, partially assembled PSII. This is probably the complex in which D1 is assembled and/or replaced. Present in 6-10% of PSII complexes; mostly in monomeric PSII. These PSII do not evolve oxygen, do not have an assembled calcium-manganese-oxide cluster. Psb27-containing PSII seem to be assembly intermediates; a wild-type strain includes the intrinsic membrane proteins, Psb27, Pbs28, substoichiometric amounts of PsbO and PsbQ but no PsbU or PsbV, while a ctpA deletion mutant includes the intrinsic membrane proteins (D1 as precursor), Psb27, a very low amount of PsbO and PsbQ, but no PsbU or PsbV. Small amounts of Psb27 interact with the lumenal domain of CP43 (psbC) in wild-type and a ctpA mutant. A small amount can also be detected in monomeric and trimeric photosystem I (PSI), possibly via association with PsaB.

The protein localises to the cellular thylakoid membrane. In terms of biological role, plays a role in the repair and/or biogenesis of the calcium-manganese-oxide cluster on the lumenal face of the thylakoid membrane. Photosystem II (PSII) complexes containing this protein are monomeric, are assembly intermediates lacking the calcium-manganese-oxide cluster and miss some of the lumenal subunits. Probably blocks binding of some of the small lumenal subunits. This is Photosystem II lipoprotein Psb27 from Synechocystis sp. (strain ATCC 27184 / PCC 6803 / Kazusa).